The sequence spans 176 residues: Peptidoglycan-associated lipoprotein (176 aa).

The first 32 residues, 1 to 32 (MSRIDTPAASRMQTIARNPVMIALVMTLALAG), serve as a signal peptide directing secretion. Cysteine 33 carries the N-palmitoyl cysteine lipid modification. The S-diacylglycerol cysteine moiety is linked to residue cysteine 33. Residues 58-175 (QQDFTVNVGD…RAVTVLGGAG (118 aa)) form the OmpA-like domain.

It belongs to the Pal lipoprotein family. The Tol-Pal system is composed of five core proteins: the inner membrane proteins TolA, TolQ and TolR, the periplasmic protein TolB and the outer membrane protein Pal. They form a network linking the inner and outer membranes and the peptidoglycan layer.

The protein localises to the cell outer membrane. In terms of biological role, part of the Tol-Pal system, which plays a role in outer membrane invagination during cell division and is important for maintaining outer membrane integrity. The sequence is that of Peptidoglycan-associated lipoprotein from Rhizobium meliloti (strain 1021) (Ensifer meliloti).